We begin with the raw amino-acid sequence, 294 residues long: uncharacterized protein (294 aa).

This is an uncharacterized protein from Halobacterium salinarum (strain ATCC 700922 / JCM 11081 / NRC-1) (Halobacterium halobium).